A 463-amino-acid polypeptide reads, in one-letter code: MTKEYKTITEISGPLVFVEKTEPVGYGELVEIRTASGEVKRGQVLDTSDEIVVVQVFEGTGGLSKDSSVRFTGDVIKMPLSPSIIGRVLSGSGRPRDGGPPIVPEVEREIIGAAINPASREKPRAFIQTGISTIDGTNTLVRGQKLPIFSGAGLPHNDVALQIARQAKVLGEAEEFAVVFCAMGITNEEAQHFMADFERTGALERAVIFLNLADDPAVERLLTPKLGLTTAEYLAFDLDMHVLVIYTDMTNYCESLRQMGAAREEVPGRRGYPGYMYTDLATNYERAGIIKGKKGSITQFPILTMPGDDITHPIPDLSGYITEGQLIVSRELHRKGIYPPIDIRPSLSRLMNSGIGAGHTREDHRAVSDQLYAYYAEGCDLRGLAAIVGKEALSERDKLILEFADQFERRFVNQGRDEDRSIIETLTIGWELLSMLPETMLTRIDDKFIKKYHPKYAGTAKKE.

The protein belongs to the ATPase alpha/beta chains family. In terms of assembly, has multiple subunits with at least A(3), B(3), C, D, E, F, H, I and proteolipid K(x).

It localises to the cell membrane. Component of the A-type ATP synthase that produces ATP from ADP in the presence of a proton gradient across the membrane. The B chain is a regulatory subunit. In Methanothrix thermoacetophila (strain DSM 6194 / JCM 14653 / NBRC 101360 / PT) (Methanosaeta thermophila), this protein is A-type ATP synthase subunit B.